The following is a 196-amino-acid chain: Pro-FMRFamide-related neuropeptide VF (196 aa).

Residues 1–21 (MEIISLKRFILLMLATSSLLT) form the signal peptide. The propeptide occupies 22 to 57 (SNIFCTDESRIPSLYSKKNYDKYSEPRGDLGWEKER). Phenylalanine 92 carries the post-translational modification Phenylalanine amide. 2 propeptides span residues 95-99 (NMEEE) and 115-121 (NREDSLS). Phenylalanine 131 bears the Phenylalanine amide mark. Positions 134-196 (TIAAKSITKT…IDDAELKQEK (63 aa)) are excised as a propeptide.

This sequence belongs to the FARP (FMRFamide related peptide) family. As to expression, expressed in hypothalamus, where it is localized to the dorsomedial hypothalamic nucleus (DMH), paraventricular nucleus (PVN), and to neuronal projections from the PVN to the neurosecretory zone of the median eminence.

Its subcellular location is the secreted. May act in concert with kisspeptin, through opposing affects, to regulate the activity of gonadotropin-releasing hormone (GnRH) neurons across the seasons, leading to an annual change in fertility and the cyclical seasonal transition from non-breeding to breeding season. Functionally, efficiently inhibits forskolin-induced production of cAMP. Acts as a potent negative regulator of gonadotropin synthesis and secretion. Induces secretion of prolactin. In terms of biological role, efficiently inhibits forskolin-induced production of cAMP. Blocks morphine-induced analgesia. Its function is as follows. Shows no inhibitory activity of forskolin-induced production of cAMP. The chain is Pro-FMRFamide-related neuropeptide VF from Ovis aries (Sheep).